A 316-amino-acid chain; its full sequence is Methionyl-tRNA formyltransferase (316 aa).

Position 112–115 (serine 112–proline 115) interacts with (6S)-5,6,7,8-tetrahydrofolate.

It belongs to the Fmt family.

It catalyses the reaction L-methionyl-tRNA(fMet) + (6R)-10-formyltetrahydrofolate = N-formyl-L-methionyl-tRNA(fMet) + (6S)-5,6,7,8-tetrahydrofolate + H(+). Functionally, attaches a formyl group to the free amino group of methionyl-tRNA(fMet). The formyl group appears to play a dual role in the initiator identity of N-formylmethionyl-tRNA by promoting its recognition by IF2 and preventing the misappropriation of this tRNA by the elongation apparatus. The protein is Methionyl-tRNA formyltransferase of Actinobacillus pleuropneumoniae serotype 7 (strain AP76).